A 268-amino-acid chain; its full sequence is Ribosomal RNA small subunit methyltransferase A (268 aa).

Asn-17, Leu-19, Gly-44, Glu-65, Asp-89, and Asn-110 together coordinate S-adenosyl-L-methionine.

The protein belongs to the class I-like SAM-binding methyltransferase superfamily. rRNA adenine N(6)-methyltransferase family. RsmA subfamily.

It is found in the cytoplasm. The enzyme catalyses adenosine(1518)/adenosine(1519) in 16S rRNA + 4 S-adenosyl-L-methionine = N(6)-dimethyladenosine(1518)/N(6)-dimethyladenosine(1519) in 16S rRNA + 4 S-adenosyl-L-homocysteine + 4 H(+). In terms of biological role, specifically dimethylates two adjacent adenosines (A1518 and A1519) in the loop of a conserved hairpin near the 3'-end of 16S rRNA in the 30S particle. May play a critical role in biogenesis of 30S subunits. The polypeptide is Ribosomal RNA small subunit methyltransferase A (Acidithiobacillus ferrooxidans (strain ATCC 53993 / BNL-5-31) (Leptospirillum ferrooxidans (ATCC 53993))).